Here is a 536-residue protein sequence, read N- to C-terminus: Nucleosome assembly protein 1-like 3 (536 aa).

Disordered stretches follow at residues 1–104 and 160–338; these read MAEA…DKLP and PTEE…KEDP. The span at 35-75 shows a compositional bias: low complexity; that stretch reads SNSSSSTTSCGSTGSSSSSSSSSSSSSSSSSGSSGSSSNGS. Residues 77-95 show a composition bias toward basic residues; it reads LHQKKRVPGPSRRAQRRPS. The segment covering 160–184 has biased composition (acidic residues); that stretch reads PTEEECEWNSEEEFSGDEEMQDDTP. Composition is skewed to basic and acidic residues over residues 199 to 220 and 227 to 269; these read GKEN…PEAK and PKET…KTDS. Positions 287–300 are enriched in polar residues; that stretch reads TQANAEYTDQPTED. Residues 306–324 show a composition bias toward basic and acidic residues; sequence PVREAQKRVPETRPEERVN.

Belongs to the nucleosome assembly protein (NAP) family.

It is found in the nucleus. This chain is Nucleosome assembly protein 1-like 3 (Nap1l3), found in Rattus norvegicus (Rat).